The following is a 412-amino-acid chain: Probable serine/threonine-protein kinase PBL10 (412 aa).

G2 carries N-myristoyl glycine lipidation. Residue C4 is the site of S-palmitoyl cysteine attachment. Positions 15–45 (GASPKYMSSEANDSLGSKSSSVSIRTNPRTE) are disordered. Positions 23–43 (SEANDSLGSKSSSVSIRTNPR) are enriched in polar residues. T58 bears the Phosphothreonine mark. Residues 69–356 (FRPDSVLGEG…VVSHLEHIQT (288 aa)) form the Protein kinase domain. Residues 75-83 (LGEGGFGSV) and K107 each bind ATP. Y152 bears the Phosphotyrosine mark. D204 serves as the catalytic Proton acceptor. S208 and S238 each carry phosphoserine. A phosphothreonine mark is found at T239 and T244. Y252 is subject to Phosphotyrosine.

This sequence belongs to the protein kinase superfamily. Ser/Thr protein kinase family. As to quaternary structure, interacts with the Xanthomonas campestris effector XopAC/AvrAC. In terms of tissue distribution, expressed in stomatal guard cells of leaves.

The protein resides in the cell membrane. The catalysed reaction is L-seryl-[protein] + ATP = O-phospho-L-seryl-[protein] + ADP + H(+). It carries out the reaction L-threonyl-[protein] + ATP = O-phospho-L-threonyl-[protein] + ADP + H(+). Functionally, possible bi-functional kinase. In vitro, it exhibits serine/threonine activity. In vivo, can phosphorylate tyrosine residues of limited substrates. May be involved in plant defense signaling. Required for full light-induced stomatal opening. In Arabidopsis thaliana (Mouse-ear cress), this protein is Probable serine/threonine-protein kinase PBL10.